We begin with the raw amino-acid sequence, 638 residues long: Probable potassium transport system protein Kup (638 aa).

The next 12 helical transmembrane spans lie at 25-45 (LAIA…LYSL), 65-85 (VISL…LLFV), 114-134 (AGAL…DAVI), 152-172 (PHLS…LFWI), 184-204 (FGPI…YHIV), 226-246 (LLQA…AEAL), 262-282 (AYGL…ALLI), 291-311 (PFFL…STVA), 352-372 (IYVP…VVGF), 382-402 (YGIA…VVMV), 410-430 (LLVG…FGAN), and 434-454 (VAQG…LLMT).

The protein belongs to the HAK/KUP transporter (TC 2.A.72) family.

The protein resides in the cell inner membrane. The catalysed reaction is K(+)(in) + H(+)(in) = K(+)(out) + H(+)(out). Transport of potassium into the cell. Likely operates as a K(+):H(+) symporter. This chain is Probable potassium transport system protein Kup, found in Burkholderia cenocepacia (strain HI2424).